We begin with the raw amino-acid sequence, 160 residues long: Surface-adhesin protein E (160 aa).

The signal sequence occupies residues 1 to 15 (MKKIILTLSLGLLTA). Cys-16 carries N-palmitoyl cysteine lipidation. The S-diacylglycerol cysteine moiety is linked to residue Cys-16. The interaction with laminin and plasminogen stretch occupies residues 41 to 68 (IRLVKNVNYYIDSESIWVDNQEPQIVHF). Positions 84–108 (PKRYARSVRQYKILNCANYHLTQVR) are interaction with vitronectin and epithelial cells.

In terms of assembly, homodimer. Interacts with host vitronectin, laminin and plasminogen. Can interact with both immobilized and soluble vitronectin.

It is found in the cell outer membrane. It localises to the cell surface. Its function is as follows. Acts as a multifunctional adhesin involved in direct interactions with host epithelial cells and host proteins, including vitronectin, laminin and plasminogen. In addition, interaction with serum vitronectin plays an important role in bacterial serum resistance, and conversion of plasminogen to plasmin at the cell surface aids in immune evasion and contributes to bacterial virulence. Induces a pro-inflammatory epithelial cell response, leading to interleukin-8 (IL-8) secretion and up-regulation of ICAM1. In Haemophilus influenzae (strain NTHi 3655), this protein is Surface-adhesin protein E (pe).